Consider the following 553-residue polypeptide: Arginine--tRNA ligase (553 aa).

Positions 123-133 (ANPTGPLTIGR) match the 'HIGH' region motif.

Belongs to the class-I aminoacyl-tRNA synthetase family. As to quaternary structure, monomer.

The protein resides in the cytoplasm. It carries out the reaction tRNA(Arg) + L-arginine + ATP = L-arginyl-tRNA(Arg) + AMP + diphosphate. The polypeptide is Arginine--tRNA ligase (Chlorobium phaeobacteroides (strain BS1)).